Consider the following 329-residue polypeptide: NADH-quinone oxidoreductase subunit H (329 aa).

Helical transmembrane passes span 9–29 (LIKI…ATYI), 42–62 (GPSY…IKLF), 75–95 (LIFT…MAPI), 117–137 (IGFL…ILAG), 154–174 (IQLL…LMVV), 188–208 (GGFL…FLIA), 238–258 (LKWG…SFVI), 269–291 (WGFI…LSMW), and 309–329 (WKIM…IILI).

It belongs to the complex I subunit 1 family. NDH-1 is composed of 14 different subunits. Subunits NuoA, H, J, K, L, M, N constitute the membrane sector of the complex.

It is found in the cell inner membrane. The catalysed reaction is a quinone + NADH + 5 H(+)(in) = a quinol + NAD(+) + 4 H(+)(out). NDH-1 shuttles electrons from NADH, via FMN and iron-sulfur (Fe-S) centers, to quinones in the respiratory chain. The immediate electron acceptor for the enzyme in this species is believed to be ubiquinone. Couples the redox reaction to proton translocation (for every two electrons transferred, four hydrogen ions are translocated across the cytoplasmic membrane), and thus conserves the redox energy in a proton gradient. This subunit may bind ubiquinone. This Helicobacter acinonychis (strain Sheeba) protein is NADH-quinone oxidoreductase subunit H.